The chain runs to 133 residues: Small ribosomal subunit protein uS8 (133 aa).

Belongs to the universal ribosomal protein uS8 family. As to quaternary structure, part of the 30S ribosomal subunit. Contacts proteins S5 and S12.

One of the primary rRNA binding proteins, it binds directly to 16S rRNA central domain where it helps coordinate assembly of the platform of the 30S subunit. The protein is Small ribosomal subunit protein uS8 of Endomicrobium trichonymphae.